Consider the following 279-residue polypeptide: Early nodulin-like protein 18 (279 aa).

The N-terminal stretch at 1–24 (MAGAVATVSVGLAWLGLMAAAASA) is a signal peptide. One can recognise a Phytocyanin domain in the interval 25 to 133 (TQFRVGGGRG…GEKLVVVVMA (109 aa)). C82 and C121 are oxidised to a cystine. An N-linked (GlcNAc...) asparagine glycan is attached at N83. The interval 138-256 (RHAPPPSPPA…ANDRSGAAAA (119 aa)) is disordered. The segment covering 140-168 (APPPSPPAVPPPVAPVPMPSPASSPPSPA) has biased composition (pro residues). Low complexity predominate over residues 169 to 185 (PAAATPSLAPSPVATTP). A compositionally biased stretch (pro residues) spans 186–199 (SPSPSVSPMAPAPA). 2 stretches are compositionally biased toward low complexity: residues 212–226 (AAMA…GGVA) and 234–256 (TDGA…AAAA). N-linked (GlcNAc...) asparagine glycosylation occurs at N238. The GPI-anchor amidated serine moiety is linked to residue S251. The propeptide at 252–279 (GAAAAAPVVAGVVVTSLGAYIGYAMLAI) is removed in mature form.

It belongs to the early nodulin-like (ENODL) family. Specifically expressed in reproductive tissues. Mainly observed in developing seeds and in mature leaves.

It is found in the cell membrane. In terms of biological role, may act as a carbohydrate transporter. Promotes tolerance to salt stress in a redox-dependent manner. The sequence is that of Early nodulin-like protein 18 from Oryza sativa subsp. japonica (Rice).